We begin with the raw amino-acid sequence, 335 residues long: Probable cytosolic iron-sulfur protein assembly protein Ciao1 (335 aa).

WD repeat units lie at residues 12–51 (GHKG…WSTK), 57–96 (GHKR…FECN), 101–140 (GHEN…EFEC), 146–185 (AHTQ…SDWD), 192–231 (SHTS…NDAG), 250–289 (QHSR…KRDE), and 301–335 (AHEQ…KVDD).

Belongs to the WD repeat CIA1 family.

Functionally, essential component of the cytosolic iron-sulfur (Fe/S) protein assembly machinery. Required for the maturation of extramitochondrial Fe/S proteins. This Drosophila pseudoobscura pseudoobscura (Fruit fly) protein is Probable cytosolic iron-sulfur protein assembly protein Ciao1.